A 330-amino-acid polypeptide reads, in one-letter code: Pantothenate kinase (330 aa).

ATP is bound at residue 108 to 115 (GSVAVGKS).

It belongs to the prokaryotic pantothenate kinase family.

It is found in the cytoplasm. The enzyme catalyses (R)-pantothenate + ATP = (R)-4'-phosphopantothenate + ADP + H(+). It functions in the pathway cofactor biosynthesis; coenzyme A biosynthesis; CoA from (R)-pantothenate: step 1/5. This chain is Pantothenate kinase, found in Allorhizobium ampelinum (strain ATCC BAA-846 / DSM 112012 / S4) (Agrobacterium vitis (strain S4)).